The chain runs to 1015 residues: GTPase-activating Rap/Ran-GAP domain-like protein 3 (1015 aa).

Residues 200-416 (LLVLEEQEGS…RTLDMLIRSL (217 aa)) form the Rap-GAP domain. One can recognise a CNH domain in the interval 498–812 (PYDIVCGDSW…QLTASRSDIY (315 aa)). 2 disordered regions span residues 821–842 (SASN…PTGY) and 924–1004 (ELLG…FTFS). Positions 823 to 835 (SNCSSRDTSSQSS) are enriched in low complexity. Over residues 949-959 (KNKEEEQKRTA) the composition is skewed to basic and acidic residues.

This sequence belongs to the GARNL3 family.

The protein is GTPase-activating Rap/Ran-GAP domain-like protein 3 (garnl3) of Danio rerio (Zebrafish).